The primary structure comprises 289 residues: Transcription factor MafA (289 aa).

Low complexity predominate over residues 52-73 (STPISTPCSSVPSSPSFCAPSP). Disordered regions lie at residues 52 to 87 (STPISTPCSSVPSSPSFCAPSPGAQSGVNPSNPNAA) and 126 to 164 (HHHHHHHQGYDGFRGQQYPGDEMAPSGHHHQVHHHHHHH). Residues 74–87 (GAQSGVNPSNPNAA) are compositionally biased toward polar residues. Residues 152-164 (GHHHQVHHHHHHH) are compositionally biased toward basic residues. The basic motif stretch occupies residues 201–226 (RLKQKRRTLKNRGYAQSCRYKRVQQR). One can recognise a bZIP domain in the interval 201-264 (RLKQKRRTLK…DLYKDKYEKL (64 aa)). Residues 229-250 (LETEKCQLQSQVEQLKQEVSRL) are leucine-zipper. Residues 266 to 289 (SRSFTTRESPPQGNPGKANADFFM) are disordered. A compositionally biased stretch (polar residues) spans 267–276 (RSFTTRESPP).

This sequence belongs to the bZIP family. Maf subfamily.

It localises to the nucleus. Transcription factor, possibly involved in transcription regulation during lens development. This chain is Transcription factor MafA (mafa), found in Xenopus tropicalis (Western clawed frog).